The sequence spans 344 residues: N-acetyl-gamma-glutamyl-phosphate reductase (344 aa).

The active site involves Cys-150.

Belongs to the NAGSA dehydrogenase family. Type 1 subfamily.

It is found in the cytoplasm. The enzyme catalyses N-acetyl-L-glutamate 5-semialdehyde + phosphate + NADP(+) = N-acetyl-L-glutamyl 5-phosphate + NADPH + H(+). Its pathway is amino-acid biosynthesis; L-arginine biosynthesis; N(2)-acetyl-L-ornithine from L-glutamate: step 3/4. Its function is as follows. Catalyzes the NADPH-dependent reduction of N-acetyl-5-glutamyl phosphate to yield N-acetyl-L-glutamate 5-semialdehyde. The sequence is that of N-acetyl-gamma-glutamyl-phosphate reductase from Pseudomonas syringae pv. syringae (strain B728a).